We begin with the raw amino-acid sequence, 350 residues long: Patr class I histocompatibility antigen, alpha chain E (350 aa).

The N-terminal stretch at 1–21 (MVDGTLLLLLSEALALTQTWA) is a signal peptide. Positions 22 to 111 (GSHSLKYFHT…LRGYYNQSEA (90 aa)) are alpha-1. Residues 22–305 (GSHSLKYFHT…KPASQPTIPI (284 aa)) lie on the Extracellular side of the membrane. Asparagine 107 carries an N-linked (GlcNAc...) asparagine glycan. The interval 112 to 203 (GSHTLQWMHG…EKGKETLLHL (92 aa)) is alpha-2. Cystine bridges form between cysteine 122-cysteine 185 and cysteine 224-cysteine 280. The interval 204 to 295 (EPPKTHVTHH…GLPEPLTLRW (92 aa)) is alpha-3. The region spanning 206 to 294 (PKTHVTHHPI…EGLPEPLTLR (89 aa)) is the Ig-like C1-type domain. Residues 296–305 (KPASQPTIPI) form a connecting peptide region. The helical transmembrane segment at 306–329 (VGIIAGLVLLGSVVSGAVVAAVMW) threads the bilayer. Residues 330–350 (RKKSSGGKGRSYSKAEWSDSA) lie on the Cytoplasmic side of the membrane.

This sequence belongs to the MHC class I family. Heterodimer of an alpha chain and a beta chain (beta-2-microglobulin).

It localises to the membrane. Its function is as follows. Preferably binds to a peptide derived from the signal sequence of most HLA-A, -B, -C and -G molecules. This chain is Patr class I histocompatibility antigen, alpha chain E (Patr-E), found in Pan troglodytes (Chimpanzee).